Consider the following 960-residue polypeptide: ATPase 4, plasma membrane-type (960 aa).

Topologically, residues methionine 1–phenylalanine 69 are cytoplasmic. Residues leucine 70–isoleucine 89 form a helical membrane-spanning segment. Residues alanine 90–tryptophan 101 lie on the Extracellular side of the membrane. A helical membrane pass occupies residues glutamine 102–glutamate 122. The Cytoplasmic segment spans residues asparagine 123–isoleucine 251. A helical transmembrane segment spans residues glycine 252–proline 272. Residues isoleucine 273–glycine 281 lie on the Extracellular side of the membrane. The helical transmembrane segment at isoleucine 282 to threonine 299 threads the bilayer. The Cytoplasmic portion of the chain corresponds to valine 300–lysine 651. The active-site 4-aspartylphosphate intermediate is the aspartate 337. The Mg(2+) site is built by aspartate 596 and aspartate 600. The chain crosses the membrane as a helical span at residues asparagine 652–leucine 673. At isoleucine 674–aspartate 678 the chain is on the extracellular side. The chain crosses the membrane as a helical span at residues phenylalanine 679–aspartate 701. Residues arginine 702 to isoleucine 717 are Cytoplasmic-facing. The chain crosses the membrane as a helical span at residues phenylalanine 718–valine 738. Residues serine 739 to arginine 763 lie on the Extracellular side of the membrane. Residues lysine 764–threonine 784 form a helical membrane-spanning segment. The Cytoplasmic segment spans residues arginine 785–glycine 796. Residues isoleucine 797–alanine 817 traverse the membrane as a helical segment. Residues asparagine 818–glutamate 825 are Extracellular-facing. Residues glycine 826–leucine 846 form a helical membrane-spanning segment. Topologically, residues aspartate 847–valine 960 are cytoplasmic. Position 893 is a phosphothreonine (threonine 893). A Phosphoserine modification is found at serine 942. The interval tyrosine 958 to valine 960 is interaction with 14-3-3 proteins. Phosphothreonine is present on threonine 959.

This sequence belongs to the cation transport ATPase (P-type) (TC 3.A.3) family. Type IIIA subfamily. Binds to 14-3-3 proteins. The binding is induced by phosphorylation of Thr-959. Binding to 14-3-3 proteins activates the H(+)-ATPase. Expressed in guard cells and roots.

The protein localises to the cell membrane. The catalysed reaction is ATP + H2O + H(+)(in) = ADP + phosphate + 2 H(+)(out). The plasma membrane H(+) ATPase of plants and fungi generates a proton gradient that drives the active transport of nutrients by H(+)-symport. The resulting external acidification and/or internal alkinization may mediate growth responses. This Arabidopsis thaliana (Mouse-ear cress) protein is ATPase 4, plasma membrane-type (AHA4).